Reading from the N-terminus, the 192-residue chain is Cytidylate kinase (192 aa).

7-15 is a binding site for ATP; that stretch reads GPPGSGKST.

Belongs to the cytidylate kinase family. Type 2 subfamily.

The protein resides in the cytoplasm. It catalyses the reaction CMP + ATP = CDP + ADP. The catalysed reaction is dCMP + ATP = dCDP + ADP. The protein is Cytidylate kinase of Halobacterium salinarum (strain ATCC 29341 / DSM 671 / R1).